Reading from the N-terminus, the 219-residue chain is Thiamine-phosphate synthase (219 aa).

4-amino-2-methyl-5-(diphosphooxymethyl)pyrimidine contacts are provided by residues 44–48 (QFREK) and Asn79. Mg(2+) contacts are provided by Asp80 and Asp99. Ser117 contacts 4-amino-2-methyl-5-(diphosphooxymethyl)pyrimidine. 143–145 (TST) is a 2-[(2R,5Z)-2-carboxy-4-methylthiazol-5(2H)-ylidene]ethyl phosphate binding site. Lys146 serves as a coordination point for 4-amino-2-methyl-5-(diphosphooxymethyl)pyrimidine. 2-[(2R,5Z)-2-carboxy-4-methylthiazol-5(2H)-ylidene]ethyl phosphate contacts are provided by residues Gly175 and 195–196 (IS).

Belongs to the thiamine-phosphate synthase family. It depends on Mg(2+) as a cofactor.

The catalysed reaction is 2-[(2R,5Z)-2-carboxy-4-methylthiazol-5(2H)-ylidene]ethyl phosphate + 4-amino-2-methyl-5-(diphosphooxymethyl)pyrimidine + 2 H(+) = thiamine phosphate + CO2 + diphosphate. It carries out the reaction 2-(2-carboxy-4-methylthiazol-5-yl)ethyl phosphate + 4-amino-2-methyl-5-(diphosphooxymethyl)pyrimidine + 2 H(+) = thiamine phosphate + CO2 + diphosphate. It catalyses the reaction 4-methyl-5-(2-phosphooxyethyl)-thiazole + 4-amino-2-methyl-5-(diphosphooxymethyl)pyrimidine + H(+) = thiamine phosphate + diphosphate. It participates in cofactor biosynthesis; thiamine diphosphate biosynthesis; thiamine phosphate from 4-amino-2-methyl-5-diphosphomethylpyrimidine and 4-methyl-5-(2-phosphoethyl)-thiazole: step 1/1. Functionally, condenses 4-methyl-5-(beta-hydroxyethyl)thiazole monophosphate (THZ-P) and 2-methyl-4-amino-5-hydroxymethyl pyrimidine pyrophosphate (HMP-PP) to form thiamine monophosphate (TMP). The polypeptide is Thiamine-phosphate synthase (Bacillus thuringiensis subsp. konkukian (strain 97-27)).